A 556-amino-acid polypeptide reads, in one-letter code: Arginine--tRNA ligase (556 aa).

The 'HIGH' region signature appears at alanine 132 to histidine 142.

It belongs to the class-I aminoacyl-tRNA synthetase family. Monomer.

It is found in the cytoplasm. The catalysed reaction is tRNA(Arg) + L-arginine + ATP = L-arginyl-tRNA(Arg) + AMP + diphosphate. The chain is Arginine--tRNA ligase from Anoxybacillus flavithermus (strain DSM 21510 / WK1).